The following is a 225-amino-acid chain: Probable septum site-determining protein MinC (225 aa).

It belongs to the MinC family. As to quaternary structure, interacts with MinD and FtsZ.

In terms of biological role, cell division inhibitor that blocks the formation of polar Z ring septums. Rapidly oscillates between the poles of the cell to destabilize FtsZ filaments that have formed before they mature into polar Z rings. Prevents FtsZ polymerization. This Listeria welshimeri serovar 6b (strain ATCC 35897 / DSM 20650 / CCUG 15529 / CIP 8149 / NCTC 11857 / SLCC 5334 / V8) protein is Probable septum site-determining protein MinC.